The following is a 504-amino-acid chain: MQLTLWTYEGPPHIGAMRIATAMQGVHYVLHAPQGDTYADLLFTMIERRDRRPPVTYTTFQARDLGSDTATLFKNAVRDAYDRFKPEAMIVGASCTAELIQDDPGGLAAALGLPIPVIPLELPAYQRKENWGAAETLYHLVRAATNGVATPDRTGRPVAVNILGPAALGFRHRDDLIEVTDLLGKLGVSINVIAPLGARFADLARIPAADANIVLYPEIAGTAAAYLARKFGQKTITTVPIGLNATRDFAAEIAALTGSTVPDDLESQARSSWYARSIDSTYLTGKRVFIFGDASHAIALARIAATEIGFTIAGLGTYSREFAREVKSAAALYNVEALISDDYLTVEAAIAAAQPELVLGTQMERHIAKRLGIPCAVISAPTHVQDFPARHSPFAGFEGANVLFDTLTHPLMMGLEEHLLGMFREDFEFNDQAAPSHLGAEAAAPVATAPILTGWEPSAEAELKKIPFFVRGKARKNTELFAAEHGVTLITIETIYDAKAHFSR.

Aspartate 36 contributes to the [4Fe-4S] cluster binding site. Aspartate 279 (proton donor) is an active-site residue. 414-415 is a substrate binding site; sequence GL.

This sequence belongs to the ChlB/BchB/BchZ family. Protochlorophyllide reductase is composed of three subunits; BchL, BchN and BchB. Forms a heterotetramer of two BchB and two BchN subunits. [4Fe-4S] cluster serves as cofactor.

The catalysed reaction is chlorophyllide a + oxidized 2[4Fe-4S]-[ferredoxin] + 2 ADP + 2 phosphate = protochlorophyllide a + reduced 2[4Fe-4S]-[ferredoxin] + 2 ATP + 2 H2O. It functions in the pathway porphyrin-containing compound metabolism; bacteriochlorophyll biosynthesis (light-independent). Functionally, component of the dark-operative protochlorophyllide reductase (DPOR) that uses Mg-ATP and reduced ferredoxin to reduce ring D of protochlorophyllide (Pchlide) to form chlorophyllide a (Chlide). This reaction is light-independent. The NB-protein (BchN-BchB) is the catalytic component of the complex. The chain is Light-independent protochlorophyllide reductase subunit B from Acidiphilium rubrum.